The sequence spans 251 residues: Capsid protein (251 aa).

Residues 3–20 (KRDLPWRSMAGTSKVSRN) carry the Bipartite nuclear localization signal motif. Residues 35 to 49 (KAAEWVNRPMYRKPR) carry the Nuclear localization signal motif. A zinc finger lies at 63 to 80 (CEGPCKVQSFEQRHDISH). The short motif at 96-117 (ITHRVGKRFCVKSVYILGKIWM) is the Nuclear export signal element. The Bipartite nuclear localization signal motif lies at 195–242 (KRFWKVNNHVVYNHQEAGKYENHTENALLLYMACTHASNPVYATLKIR).

It belongs to the geminiviridae capsid protein family. In terms of assembly, homomultimer. Binds to single-stranded and double-stranded viral DNA. Interacts (via nuclear localization signals) with host importin alpha-1a.

The protein localises to the virion. The protein resides in the host nucleus. Functionally, encapsidates the viral DNA into characteristic twinned ('geminate') particles. Binds the genomic viral ssDNA and shuttles it into and out of the cell nucleus. The CP of bipartite geminiviruses is not required for cell-to-cell or systemic movement. This is Capsid protein from Tomato mottle virus (isolate Florida) (ToMoV).